The following is a 129-amino-acid chain: Glycine cleavage system H protein (129 aa).

In terms of domain architecture, Lipoyl-binding spans 24–106 (SYTVGISEHA…FGDGWFFRVM (83 aa)). Lys-65 carries the post-translational modification N6-lipoyllysine.

This sequence belongs to the GcvH family. The glycine cleavage system is composed of four proteins: P, T, L and H. It depends on (R)-lipoate as a cofactor.

Functionally, the glycine cleavage system catalyzes the degradation of glycine. The H protein shuttles the methylamine group of glycine from the P protein to the T protein. This chain is Glycine cleavage system H protein, found in Shewanella woodyi (strain ATCC 51908 / MS32).